We begin with the raw amino-acid sequence, 248 residues long: E3 ubiquitin-protein ligase BIG BROTHER (248 aa).

The RING-type; atypical zinc-finger motif lies at 197–238; sequence CVICQLKYKIGERQMNLPCKHVYHSECISKWLSINKVCPVCN.

In terms of assembly, interacts with the E2 ubiquitin conjugating enzyme UBC10 via the RING domain. Interacts with DA1. In terms of processing, auto-ubiquitinated. Mostly expressed in inflorescence, and, to a lower extent, in seedlings, roots, stems, leaves and siliques.

The enzyme catalyses S-ubiquitinyl-[E2 ubiquitin-conjugating enzyme]-L-cysteine + [acceptor protein]-L-lysine = [E2 ubiquitin-conjugating enzyme]-L-cysteine + N(6)-ubiquitinyl-[acceptor protein]-L-lysine.. Its pathway is protein modification; protein ubiquitination. Its function is as follows. E3 ubiquitin-protein ligase that limits organ size, and possibly seed size, in a dose-dependent manner. Negatively regulates the duration of cell proliferation in leaves and petals independently of the major phytohormones (e.g. auxin, cytokinin, gibberellin, brassinosteroids, ethylene, abscisic acid, jasmonic acid), probably by targeting growth stimulators for degradation. Limits the proliferation of root meristematic cells. Polyubiquitinates DA1. Involved in the promotion of leaf senescence, in addition to its function in restricting plant growth. Possesses E3 ubiquitin-protein ligase activity in vitro. The sequence is that of E3 ubiquitin-protein ligase BIG BROTHER (BB) from Arabidopsis thaliana (Mouse-ear cress).